We begin with the raw amino-acid sequence, 264 residues long: 2-C-methyl-D-erythritol 4-phosphate cytidylyltransferase (264 aa).

The disordered stretch occupies residues 234–264 (ARDPESAHPQSSVLASAFSGPGSRVSGPEEI).

Belongs to the IspD/TarI cytidylyltransferase family. IspD subfamily.

The catalysed reaction is 2-C-methyl-D-erythritol 4-phosphate + CTP + H(+) = 4-CDP-2-C-methyl-D-erythritol + diphosphate. It participates in isoprenoid biosynthesis; isopentenyl diphosphate biosynthesis via DXP pathway; isopentenyl diphosphate from 1-deoxy-D-xylulose 5-phosphate: step 2/6. Catalyzes the formation of 4-diphosphocytidyl-2-C-methyl-D-erythritol from CTP and 2-C-methyl-D-erythritol 4-phosphate (MEP). The protein is 2-C-methyl-D-erythritol 4-phosphate cytidylyltransferase of Xanthomonas euvesicatoria pv. vesicatoria (strain 85-10) (Xanthomonas campestris pv. vesicatoria).